Reading from the N-terminus, the 80-residue chain is UPF0125 protein PD_1376 (80 aa).

The protein belongs to the UPF0125 (RnfH) family.

The chain is UPF0125 protein PD_1376 from Xylella fastidiosa (strain Temecula1 / ATCC 700964).